Reading from the N-terminus, the 188-residue chain is Elongation factor P (188 aa).

It belongs to the elongation factor P family.

It is found in the cytoplasm. Its pathway is protein biosynthesis; polypeptide chain elongation. In terms of biological role, involved in peptide bond synthesis. Stimulates efficient translation and peptide-bond synthesis on native or reconstituted 70S ribosomes in vitro. Probably functions indirectly by altering the affinity of the ribosome for aminoacyl-tRNA, thus increasing their reactivity as acceptors for peptidyl transferase. This Aeromonas salmonicida (strain A449) protein is Elongation factor P.